Here is a 349-residue protein sequence, read N- to C-terminus: Phosphoribosylformylglycinamidine cyclo-ligase (349 aa).

It belongs to the AIR synthase family.

The protein localises to the cytoplasm. It carries out the reaction 2-formamido-N(1)-(5-O-phospho-beta-D-ribosyl)acetamidine + ATP = 5-amino-1-(5-phospho-beta-D-ribosyl)imidazole + ADP + phosphate + H(+). Its pathway is purine metabolism; IMP biosynthesis via de novo pathway; 5-amino-1-(5-phospho-D-ribosyl)imidazole from N(2)-formyl-N(1)-(5-phospho-D-ribosyl)glycinamide: step 2/2. The protein is Phosphoribosylformylglycinamidine cyclo-ligase of Listeria monocytogenes serovar 1/2a (strain ATCC BAA-679 / EGD-e).